Reading from the N-terminus, the 926-residue chain is Tyrosine-protein phosphatase non-receptor type 4 (926 aa).

The 284-residue stretch at 29–312 (VVCNILLLDN…EHHTFFRLDR (284 aa)) folds into the FERM domain. Disordered regions lie at residues 380-412 (DDRL…TRLR) and 430-475 (EVFV…KNSW). 2 stretches are compositionally biased toward polar residues: residues 398–408 (NHRNSTFTQEG) and 430–456 (EVFV…SQET). Serine 474 carries the phosphoserine modification. The PDZ domain maps to 517-589 (LIRMKPDENG…DQVVLFIKAS (73 aa)). One can recognise a Tyrosine-protein phosphatase domain in the interval 655-911 (VLTQFDQLYR…RFVCEAILKV (257 aa)). Substrate contacts are provided by residues aspartate 820, 852-858 (CSAGIGR), and glutamine 896. The active-site Phosphocysteine intermediate is cysteine 852.

This sequence belongs to the protein-tyrosine phosphatase family. Non-receptor class subfamily. In terms of assembly, interacts with MAPK12 (via C-terminus); this interaction abolishes PTPN4 catalytic autoinhibition and thus activates the phosphatase activity. (Microbial infection) Interacts with attenuated rabies virus protein G; this interaction is required for virally-induced apoptosis. Post-translationally, highly phosphorylated on serine and threonine residues but not on tyrosines. In terms of processing, cleaved and activated by calpain I/CAPN1.

The protein resides in the cell membrane. The protein localises to the cytoplasm. Its subcellular location is the cytoskeleton. The catalysed reaction is O-phospho-L-tyrosyl-[protein] + H2O = L-tyrosyl-[protein] + phosphate. In terms of biological role, phosphatase that plays a role in immunity, learning, synaptic plasticity or cell homeostasis. Regulates neuronal cell homeostasis by protecting neurons against apoptosis. Negatively regulates TLR4-induced interferon beta production by dephosphorylating adapter TICAM2 and inhibiting subsequent TRAM-TRIF interaction. Also dephosphorylates the immunoreceptor tyrosine-based activation motifs/ITAMs of the TCR zeta subunit and thereby negatively regulates TCR-mediated signaling pathway. May act at junctions between the membrane and the cytoskeleton. The chain is Tyrosine-protein phosphatase non-receptor type 4 (PTPN4) from Homo sapiens (Human).